We begin with the raw amino-acid sequence, 169 residues long: Putative prolyl-tRNA synthetase associated domain-containing protein 1 (169 aa).

The protein belongs to the PRORSD1 family.

This Homo sapiens (Human) protein is Putative prolyl-tRNA synthetase associated domain-containing protein 1 (PRORSD1P).